Reading from the N-terminus, the 260-residue chain is Small ribosomal subunit protein uS2 (260 aa).

It belongs to the universal ribosomal protein uS2 family.

The polypeptide is Small ribosomal subunit protein uS2 (rpsB) (Borreliella burgdorferi (strain ATCC 35210 / DSM 4680 / CIP 102532 / B31) (Borrelia burgdorferi)).